A 203-amino-acid chain; its full sequence is UPF0637 protein SH1846 (203 aa).

This sequence belongs to the UPF0637 family.

The chain is UPF0637 protein SH1846 from Staphylococcus haemolyticus (strain JCSC1435).